An 84-amino-acid polypeptide reads, in one-letter code: Small ribosomal subunit protein uS17 (84 aa).

This sequence belongs to the universal ribosomal protein uS17 family. In terms of assembly, part of the 30S ribosomal subunit.

One of the primary rRNA binding proteins, it binds specifically to the 5'-end of 16S ribosomal RNA. The polypeptide is Small ribosomal subunit protein uS17 (Salmonella typhi).